A 186-amino-acid chain; its full sequence is Superoxide dismutase [Cu-Zn] (186 aa).

Residues 1-20 form the signal peptide; that stretch reads MKKTVLALMFSCGMVASAFA. Positions 79, 81, and 104 each coordinate Cu cation. A disulfide bridge connects residues C86 and C182. Zn(2+) is bound by residues H104, H113, H122, and D125. Residue H160 coordinates Cu cation.

The protein belongs to the Cu-Zn superoxide dismutase family. Homodimer. Cu cation is required as a cofactor. It depends on Zn(2+) as a cofactor.

The protein localises to the periplasm. The enzyme catalyses 2 superoxide + 2 H(+) = H2O2 + O2. Its function is as follows. Destroys radicals which are normally produced within the cells and which are toxic to biological systems. This is Superoxide dismutase [Cu-Zn] (sodC) from Pasteurella multocida (strain Pm70).